Reading from the N-terminus, the 740-residue chain is Elongation factor 2 (740 aa).

In terms of domain architecture, tr-type G spans 23 to 264 (AQIRNAGTLA…MIIEHVPPPN (242 aa)). Residues 32-39 (AHVDHGKT), 98-102 (DTPGH), and 152-155 (NKID) contribute to the GTP site. Diphthamide is present on histidine 605.

This sequence belongs to the TRAFAC class translation factor GTPase superfamily. Classic translation factor GTPase family. EF-G/EF-2 subfamily.

The protein localises to the cytoplasm. Catalyzes the GTP-dependent ribosomal translocation step during translation elongation. During this step, the ribosome changes from the pre-translocational (PRE) to the post-translocational (POST) state as the newly formed A-site-bound peptidyl-tRNA and P-site-bound deacylated tRNA move to the P and E sites, respectively. Catalyzes the coordinated movement of the two tRNA molecules, the mRNA and conformational changes in the ribosome. This chain is Elongation factor 2, found in Pyrobaculum calidifontis (strain DSM 21063 / JCM 11548 / VA1).